Consider the following 1064-residue polypeptide: Adenylate cyclase type 4 (1064 aa).

Residues 1–28 (MARLFSPRPPPSEDLFYETYYSLSQQYP) lie on the Cytoplasmic side of the membrane. 6 consecutive transmembrane segments (helical) span residues 29–50 (LLIL…VAWA), 61–80 (FLTT…GLAS), 94–117 (GLIW…VSAW), 120–138 (VSFF…PLGM), 141–162 (AAAA…YLGW), and 170–190 (LLPQ…VGAY). The Cytoplasmic portion of the chain corresponds to 191 to 582 (HKALMERALR…YRLSALPAFK (392 aa)). Aspartate 278, isoleucine 279, and aspartate 322 together coordinate Mg(2+). ATP-binding positions include 278-283 (DIVGFT), 320-322 (LGD), and arginine 366. The interval 498 to 523 (DSPASTSTPLPEKAFSPQWSLDRSRT) is disordered. Residue serine 517 is modified to Phosphoserine. The residue at position 533 (threonine 533) is a Phosphothreonine. 3 helical membrane-spanning segments follow: residues 583-604 (YYAA…LVTT), 608-630 (ALAT…CFSE), and 661-684 (VALG…FLPV). Residues 685–707 (SSDCPFLAPNVSSVAFNTSWELP) lie on the Extracellular side of the membrane. 2 N-linked (GlcNAc...) asparagine glycosylation sites follow: asparagine 694 and asparagine 701. A run of 3 helical transmembrane segments spans residues 708–733 (ASLP…SLFL), 741–761 (LLLL…SHAW), and 788–804 (MGAI…LVLA). Topologically, residues 805 to 1064 (RQNEYYCRLD…LTRTGSPSAS (260 aa)) are cytoplasmic. Residues lysine 914, 994–996 (DIW), 1001–1005 (NVASR), and lysine 1041 each bind ATP.

The protein belongs to the adenylyl cyclase class-4/guanylyl cyclase family. Requires Mg(2+) as cofactor. Mn(2+) is required as a cofactor. Widely distributed.

It is found in the cell membrane. It localises to the cytoplasm. The catalysed reaction is ATP = 3',5'-cyclic AMP + diphosphate. Its activity is regulated as follows. Activated by forskolin. Insensitive to calcium/calmodulin. Stimulated by GNAS and by the G-protein beta and gamma subunit complex. Functionally, catalyzes the formation of the signaling molecule cAMP in response to G-protein signaling. The chain is Adenylate cyclase type 4 (Adcy4) from Rattus norvegicus (Rat).